The following is a 633-amino-acid chain: Micronuclear linker histone polyprotein (633 aa).

DNA-binding regions (HMG box) lie at residues 12-74 and 96-164; these read PPKK…LFHY and PKKP…KKWN. The interval 170 to 633 is disordered; it reads AAQKKQTKRK…AYGKKANKKQ (464 aa). Residues 174–190 show a composition bias toward basic residues; sequence KQTKRKNSTSKSRRSSS. 2 stretches are compositionally biased toward low complexity: residues 212 to 224 and 253 to 271; these read SSAS…SSSS and NSTS…SSSS. Basic residues-rich tracts occupy residues 272–309 and 330–352; these read KNKK…RKSS and SNKR…RKSS. Composition is skewed to basic and acidic residues over residues 353–374 and 382–401; these read KSQE…EGQK and AKRD…EART. Positions 406–416 are enriched in low complexity; the sequence is NKSASKASKSG. Residues 417 to 444 are compositionally biased toward basic residues; it reads SKSKGKSASKSKGKSSSKGKNSKSRSAS. Positions 446-469 are enriched in polar residues; sequence PKSNAAQNSNNTHQTADSSENASS. The span at 478-491 shows a compositional bias: basic and acidic residues; it reads RQREQKDMVNEKSN. Basic residues predominate over residues 496–524; that stretch reads SKGKKNSKSNTRSKSKSKSASKSRKNASK. Composition is skewed to basic and acidic residues over residues 540–550 and 559–612; these read SRSESKSKSEA and EVIE…EDSK.

Post-translationally, all four histones are processed from the precursor molecule. Phosphorylated in growing and dividing cells but not in nongrowing (starved) cells. In terms of processing, the N-terminus of MIC LH-alpha and MIC LH-delta is blocked.

The protein resides in the nucleus. The protein localises to the chromosome. The sequence is that of Micronuclear linker histone polyprotein (MLH) from Tetrahymena thermophila (strain SB210).